Consider the following 262-residue polypeptide: tRNA pseudouridine synthase A (262 aa).

Aspartate 56 acts as the Nucleophile in catalysis. Residue tyrosine 114 participates in substrate binding.

The protein belongs to the tRNA pseudouridine synthase TruA family. In terms of assembly, homodimer.

It carries out the reaction uridine(38/39/40) in tRNA = pseudouridine(38/39/40) in tRNA. Functionally, formation of pseudouridine at positions 38, 39 and 40 in the anticodon stem and loop of transfer RNAs. The protein is tRNA pseudouridine synthase A of Lactiplantibacillus plantarum (strain ATCC BAA-793 / NCIMB 8826 / WCFS1) (Lactobacillus plantarum).